The chain runs to 513 residues: ATP synthase subunit alpha 1 (513 aa).

169–176 (GDRQTGKT) serves as a coordination point for ATP.

The protein belongs to the ATPase alpha/beta chains family. F-type ATPases have 2 components, CF(1) - the catalytic core - and CF(0) - the membrane proton channel. CF(1) has five subunits: alpha(3), beta(3), gamma(1), delta(1), epsilon(1). CF(0) has three main subunits: a(1), b(2) and c(9-12). The alpha and beta chains form an alternating ring which encloses part of the gamma chain. CF(1) is attached to CF(0) by a central stalk formed by the gamma and epsilon chains, while a peripheral stalk is formed by the delta and b chains.

It localises to the cell inner membrane. The enzyme catalyses ATP + H2O + 4 H(+)(in) = ADP + phosphate + 5 H(+)(out). Produces ATP from ADP in the presence of a proton gradient across the membrane. The alpha chain is a regulatory subunit. This is ATP synthase subunit alpha 1 from Vibrio campbellii (strain ATCC BAA-1116).